Reading from the N-terminus, the 521-residue chain is Acetylcholine receptor subunit beta-like 1 (521 aa).

A signal peptide spans 1–24; sequence MESSCKSWLLCSILVLVAFSLVSA. Residues 25–235 are Extracellular-facing; the sequence is SEDEERLVRD…ITFYIIIRRK (211 aa). Asparagine 48 carries N-linked (GlcNAc...) asparagine glycosylation. Cysteine 152 and cysteine 166 are oxidised to a cystine. Transmembrane regions (helical) follow at residues 236–260, 268–286, and 302–323; these read TLFY…VFYL, VTLG…LLVS, and YLLF…IINW. Residues 324–481 are Cytoplasmic-facing; it reads NFRGPRTHRM…WKYVAMVIDR (158 aa). A helical membrane pass occupies residues 482-500; that stretch reads LQLYIFFIVTTAGTVGILM.

It belongs to the ligand-gated ion channel (TC 1.A.9) family. Acetylcholine receptor (TC 1.A.9.1) subfamily. CNS in embryos.

It is found in the postsynaptic cell membrane. The protein resides in the cell membrane. After binding acetylcholine, the AChR responds by an extensive change in conformation that affects all subunits and leads to opening of an ion-conducting channel across the plasma membrane. The chain is Acetylcholine receptor subunit beta-like 1 (nAChRbeta1) from Drosophila melanogaster (Fruit fly).